Reading from the N-terminus, the 626-residue chain is Lipoprotein LpqB (626 aa).

Residues 1 to 23 (MIGQANRIAAAVSTACLAVLLAG) form the signal peptide. The N-palmitoyl cysteine moiety is linked to residue cysteine 24. Cysteine 24 carries S-diacylglycerol cysteine lipidation. Positions 428-457 (EAEREEDLADDTEPGDTAVGSTERRETDRG) are disordered. Acidic residues predominate over residues 430 to 441 (EREEDLADDTEP).

The protein belongs to the LpqB lipoprotein family.

The protein resides in the cell membrane. The polypeptide is Lipoprotein LpqB (Thermobifida fusca (strain YX)).